Consider the following 214-residue polypeptide: Charged multivesicular body protein 2b (214 aa).

Residues 25–55 adopt a coiled-coil conformation; the sequence is QRQIARDRTALEKQEKQLEMEIKKMAKTGNR. The disordered stretch occupies residues 178 to 199; the sequence is MAHAPSAARKTPSAATAKADGI. The MIT-interacting motif motif lies at 202-212; sequence EDIERQLKALG.

Belongs to the SNF7 family. In terms of assembly, probable core component of the endosomal sorting required for transport complex III (ESCRT-III). ESCRT-III components are thought to multimerize to form a flat lattice on the perimeter membrane of the endosome.

Its subcellular location is the cytoplasm. The protein resides in the cytosol. The protein localises to the late endosome membrane. In terms of biological role, probable core component of the endosomal sorting required for transport complex III (ESCRT-III) which is involved in multivesicular bodies (MVBs) formation and sorting of endosomal cargo proteins into MVBs. MVBs contain intraluminal vesicles (ILVs) that are generated by invagination and scission from the limiting membrane of the endosome and mostly are delivered to lysosomes enabling degradation of membrane proteins, such as stimulated growth factor receptors, lysosomal enzymes and lipids. This is Charged multivesicular body protein 2b (chmp2b) from Danio rerio (Zebrafish).